Reading from the N-terminus, the 418-residue chain is Homocitrate synthase, mitochondrial (418 aa).

The segment covering 1–10 has biased composition (polar residues); the sequence is MSVSEANGTE. The segment at 1 to 25 is disordered; that stretch reads MSVSEANGTETIKPPMNGNPYGPNP. The segment covering 14-25 has biased composition (low complexity); it reads PPMNGNPYGPNP. In terms of domain architecture, Pyruvate carboxyltransferase spans 35–288; that stretch reads FSIIESTLRE…THKYKLNQLR (254 aa). Residues Arg-43, Glu-44, and His-103 each coordinate 2-oxoglutarate. Glu-44 is a binding site for L-lysine. Glu-44 is a binding site for Zn(2+). Residue Asp-123 participates in L-lysine binding. Residues Arg-163, Ser-165, Thr-197, His-224, and His-226 each contribute to the 2-oxoglutarate site. Thr-197 provides a ligand contact to L-lysine. Zn(2+) is bound by residues His-224 and His-226. The active-site Proton acceptor is the His-321.

This sequence belongs to the alpha-IPM synthase/homocitrate synthase family. Homocitrate synthase LYS20/LYS21 subfamily. Mg(2+) is required as a cofactor. Mn(2+) serves as cofactor. Requires Zn(2+) as cofactor. It depends on Co(2+) as a cofactor.

Its subcellular location is the mitochondrion. The catalysed reaction is acetyl-CoA + 2-oxoglutarate + H2O = (2R)-homocitrate + CoA + H(+). The protein operates within amino-acid biosynthesis; L-lysine biosynthesis via AAA pathway; L-alpha-aminoadipate from 2-oxoglutarate: step 1/5. The activity is controled by feedback inhibition by L-lysine, the final product of the pathway that acts as a competitive inhibitor of 2-oxoglutarate. Catalyzes the aldol-type condensation of 2-oxoglutarate with acetyl-CoA to yield homocitrate, the first step of the alpha-aminoadipate (AAA) lysine biosynthesis pathway. The chain is Homocitrate synthase, mitochondrial from Schizosaccharomyces pombe (strain 972 / ATCC 24843) (Fission yeast).